The chain runs to 524 residues: Thioredoxin reductase 2, mitochondrial (524 aa).

A mitochondrion-targeting transit peptide spans M1 to A34. D41–Y70 is an FAD binding site. K79 is subject to N6-succinyllysine. An intrachain disulfide couples C86 to C91. N6-succinyllysine is present on residues K175 and K329. H497 functions as the Proton acceptor in the catalytic mechanism. The cysteinyl-selenocysteine (Cys-Sec) cross-link spans C522 to U523. U523 is a non-standard amino acid (selenocysteine).

This sequence belongs to the class-I pyridine nucleotide-disulfide oxidoreductase family. Homodimer. FAD serves as cofactor. In terms of tissue distribution, expressed in liver, heart, testis and kidney.

It localises to the mitochondrion. It catalyses the reaction [thioredoxin]-dithiol + NADP(+) = [thioredoxin]-disulfide + NADPH + H(+). Involved in the control of reactive oxygen species levels and the regulation of mitochondrial redox homeostasis. Maintains thioredoxin in a reduced state. May play a role in redox-regulated cell signaling. The sequence is that of Thioredoxin reductase 2, mitochondrial from Mus musculus (Mouse).